The primary structure comprises 524 residues: Secologanin synthase 1 (524 aa).

Over 1-11 the chain is Lumenal; sequence MEMDMDTIRKA. The chain crosses the membrane as a helical span at residues 12-32; sequence IAATIFALVMAWAWRVLDWAW. Residues 33 to 524 lie on the Cytoplasmic side of the membrane; it reads FTPKRIEKRL…SHVIYKKLES (492 aa). Residue Cys470 coordinates heme.

The protein belongs to the cytochrome P450 family. The cofactor is heme. Upper and lower leaf epidermis.

It is found in the endoplasmic reticulum membrane. It carries out the reaction loganin + reduced [NADPH--hemoprotein reductase] + O2 = secologanin + oxidized [NADPH--hemoprotein reductase] + 2 H2O + H(+). The enzyme catalyses secologanin + reduced [NADPH--hemoprotein reductase] + O2 = secoxyloganin + oxidized [NADPH--hemoprotein reductase] + H2O + 2 H(+). Its pathway is alkaloid biosynthesis; secologanin biosynthesis. Its function is as follows. Component of the seco-iridoid and derivatives monoterpenoid indole alkaloids (MIAs, e.g. secologanin) biosynthesis pathway. Catalyzes the conversion of loganin into secologanin. Catalyzes the conversion of secologanin into secoxyloganin. This Catharanthus roseus (Madagascar periwinkle) protein is Secologanin synthase 1.